Consider the following 398-residue polypeptide: tRNA (guanine-N(7)-)-methyltransferase (398 aa).

The S-adenosyl-L-methionine site is built by glutamate 124, glutamate 149, and aspartate 176. Aspartate 232 contributes to the substrate binding site.

The protein belongs to the class I-like SAM-binding methyltransferase superfamily. TrmB family.

It carries out the reaction guanosine(46) in tRNA + S-adenosyl-L-methionine = N(7)-methylguanosine(46) in tRNA + S-adenosyl-L-homocysteine. Its pathway is tRNA modification; N(7)-methylguanine-tRNA biosynthesis. In terms of biological role, catalyzes the formation of N(7)-methylguanine at position 46 (m7G46) in tRNA. This is tRNA (guanine-N(7)-)-methyltransferase from Helicobacter acinonychis (strain Sheeba).